The following is a 533-amino-acid chain: Adenine deaminase (533 aa).

The protein belongs to the metallo-dependent hydrolases superfamily. Adenine deaminase family. Mn(2+) serves as cofactor.

It catalyses the reaction adenine + H2O + H(+) = hypoxanthine + NH4(+). The chain is Adenine deaminase from Sulfurovum sp. (strain NBC37-1).